Consider the following 246-residue polypeptide: uncharacterized protein (246 aa).

Residues 7–29 (GRGALASTGGCVVLAVAALMFVF) form a helical membrane-spanning segment.

Its subcellular location is the membrane. This is an uncharacterized protein from Treponema pallidum (strain Nichols).